Reading from the N-terminus, the 121-residue chain is uncharacterized protein (121 aa).

It to M.jannaschii MJ0989.

This is an uncharacterized protein from Methanopyrus kandleri (strain AV19 / DSM 6324 / JCM 9639 / NBRC 100938).